A 156-amino-acid chain; its full sequence is Ribosomal RNA large subunit methyltransferase H (156 aa).

S-adenosyl-L-methionine is bound by residues leucine 74, glycine 105, and 124-129; that span reads LSKLTL.

The protein belongs to the RNA methyltransferase RlmH family. Homodimer.

Its subcellular location is the cytoplasm. The enzyme catalyses pseudouridine(1915) in 23S rRNA + S-adenosyl-L-methionine = N(3)-methylpseudouridine(1915) in 23S rRNA + S-adenosyl-L-homocysteine + H(+). Its function is as follows. Specifically methylates the pseudouridine at position 1915 (m3Psi1915) in 23S rRNA. The polypeptide is Ribosomal RNA large subunit methyltransferase H (Legionella pneumophila (strain Lens)).